The chain runs to 70 residues: Envelope small membrane protein (70 aa).

Glycine 2 carries the N-myristoyl glycine; by host lipid modification. Residues 2–15 (GSLWSKISQLFVDA) form an endoplasmic reticulum retention signal region. At 2 to 25 (GSLWSKISQLFVDAFTEFLVSVVD) the chain is on the virion surface side. The chain crosses the membrane as a helical span at residues 26–46 (IVIFLAILFGFTVAGWLLVFL). At 47-70 (LRVVCSALLRSRSAIHSPELSKVL) the chain is on the intravirion side.

The protein belongs to the arteriviridae E protein family. In terms of assembly, homooligomer. Associates with itself into higher-order structures, including dimers, trimers and tetramers. Associates with the GP2b-GP3-GP4 complex. Myristoylated. Post-translationally, not glycosylated.

It localises to the virion membrane. The protein resides in the host endoplasmic reticulum membrane. It is found in the host Golgi apparatus membrane. Its subcellular location is the secreted. In terms of biological role, minor envelope protein. May function as a viroporin in the virion envelope that facilitates uncoating of the virus in order to release the genomic RNA into the cytoplasm for subsequent replication. In Sus scrofa (Pig), this protein is Envelope small membrane protein (GP2b).